We begin with the raw amino-acid sequence, 52 residues long: Superoxide dismutase [Cu-Zn] 2 (52 aa).

H44 is a Cu cation binding site.

The protein belongs to the Cu-Zn superoxide dismutase family. Homodimer. Requires Cu cation as cofactor. Zn(2+) is required as a cofactor.

Its subcellular location is the cytoplasm. It catalyses the reaction 2 superoxide + 2 H(+) = H2O2 + O2. Its function is as follows. Destroys radicals which are normally produced within the cells and which are toxic to biological systems. In Debaryomyces hansenii (Yeast), this protein is Superoxide dismutase [Cu-Zn] 2.